The sequence spans 389 residues: Ankyrin repeat domain-containing protein 42 (389 aa).

The disordered stretch occupies residues 1–21; it reads MPGVANSGPSTSSRETANPCS. Positions 7–19 are enriched in polar residues; sequence SGPSTSSRETANP. ANK repeat units lie at residues 25–60, 64–93, 97–126, 130–159, 163–192, 200–232, 235–265, 269–298, and 302–332; these read VHFGSIHDAVRAGDVKQLSEIVCLHWLLWHGADITH, RGWTASHIAAIRGQDACVQALIMNGANLTA, RGCTPLHLAATHGHSFTLQIMLRSGVDPSV, REWRPVHYAAFHGRLGCLQLLVKWGCSIED, NGNLPVHLAAMEGHLHCFKFLVSRMSSATQ, NGENVLDLAQRFFKQNILQFIQGAEYEGKDLED, TLAFPGHVAAFKGDLGMLKKLVEDGVININE, NGSTPMHKAAGQGHIECLQWLIKMGADSNI, and AGERPSDVAKRFAHLAAVKLLEELQKYDIDD.

The polypeptide is Ankyrin repeat domain-containing protein 42 (ANKRD42) (Homo sapiens (Human)).